A 59-amino-acid chain; its full sequence is Antibacterial peptide enbocin (59 aa).

The signal sequence occupies residues 1–20 (MNFTRIIFFLFVVVFATASG). A propeptide is located at residue Lys-21. A Serine amide modification is found at Ser-58.

Belongs to the cecropin family.

It is found in the secreted. Its function is as follows. Has antibacterial activity against Gram-positive and Gram-negative bacteria. This Bombyx mori (Silk moth) protein is Antibacterial peptide enbocin.